A 237-amino-acid polypeptide reads, in one-letter code: Phosphoribosylaminoimidazole-succinocarboxamide synthase (237 aa).

It belongs to the SAICAR synthetase family.

The catalysed reaction is 5-amino-1-(5-phospho-D-ribosyl)imidazole-4-carboxylate + L-aspartate + ATP = (2S)-2-[5-amino-1-(5-phospho-beta-D-ribosyl)imidazole-4-carboxamido]succinate + ADP + phosphate + 2 H(+). It functions in the pathway purine metabolism; IMP biosynthesis via de novo pathway; 5-amino-1-(5-phospho-D-ribosyl)imidazole-4-carboxamide from 5-amino-1-(5-phospho-D-ribosyl)imidazole-4-carboxylate: step 1/2. This Methanosarcina mazei (strain ATCC BAA-159 / DSM 3647 / Goe1 / Go1 / JCM 11833 / OCM 88) (Methanosarcina frisia) protein is Phosphoribosylaminoimidazole-succinocarboxamide synthase.